The primary structure comprises 324 residues: tRNA pseudouridine synthase B (324 aa).

Substrate is bound at residue H43. The Nucleophile role is filled by D48. Substrate-binding residues include Y76, Y179, and L200.

The protein belongs to the pseudouridine synthase TruB family. Type 1 subfamily.

The catalysed reaction is uridine(55) in tRNA = pseudouridine(55) in tRNA. Functionally, responsible for synthesis of pseudouridine from uracil-55 in the psi GC loop of transfer RNAs. The sequence is that of tRNA pseudouridine synthase B from Yersinia pestis bv. Antiqua (strain Nepal516).